Here is a 410-residue protein sequence, read N- to C-terminus: ATP phosphoribosyltransferase regulatory subunit (410 aa).

The protein belongs to the class-II aminoacyl-tRNA synthetase family. HisZ subfamily. Heteromultimer composed of HisG and HisZ subunits.

The protein resides in the cytoplasm. It functions in the pathway amino-acid biosynthesis; L-histidine biosynthesis; L-histidine from 5-phospho-alpha-D-ribose 1-diphosphate: step 1/9. Its function is as follows. Required for the first step of histidine biosynthesis. May allow the feedback regulation of ATP phosphoribosyltransferase activity by histidine. In Synechococcus sp. (strain JA-3-3Ab) (Cyanobacteria bacterium Yellowstone A-Prime), this protein is ATP phosphoribosyltransferase regulatory subunit.